We begin with the raw amino-acid sequence, 674 residues long: Pannexin-2 (674 aa).

Over 11-53 (MATALLAGEKLRELILPGSQDDKAGALAALLLQLKLELPFDRV) the chain is Cytoplasmic. The chain crosses the membrane as a helical span at residues 54–74 (VTIGTVLVPILLVTLVFTKNF). Residues 75–125 (AEEPIYCYTPHNFTRDQALYARGYCWTELRDALPGVDASLWPSLFEHKFLP) are Extracellular-facing. Asparagine 86 is a glycosylation site (N-linked (GlcNAc...) asparagine). The chain crosses the membrane as a helical span at residues 126 to 146 (YALLAFAAIMYVPALGWEFLA). At 147-230 (STRLTSELNF…NFLAKLYLAR (84 aa)) the chain is on the cytoplasmic side. A helical membrane pass occupies residues 231–251 (HVLILLLSVVPISYLCTYYAT). Topologically, residues 252 to 295 (QKQNEFTCALGASPDGPVGSAGPTVRVSCKLPSVQLQRIIAGVD) are extracellular. Residues 296–316 (IVLLCFMNLIILVNLIHLFIF) traverse the membrane as a helical segment. The Cytoplasmic segment spans residues 317-674 (RKSNFIFDKL…PRTVVSTVEF (358 aa)). The span at 394–408 (TTPTVRDSGIQTVDP) shows a compositional bias: polar residues. 2 disordered regions span residues 394–426 (TTPT…VVKR) and 485–510 (AHHY…KKHT). A phosphoserine mark is found at serine 590 and serine 601.

Belongs to the pannexin family. As to quaternary structure, forms PANX1/PANX2-heteromeric intercellular channels on coexpression in paired Xenopus oocytes. Does not form homomeric channels. S-palmitoylated in neural stem and progenitor cells. Post-translationally, cleaved by CASP3 and CASP7 during apoptosis. Cleavage has no effect on it function. In terms of tissue distribution, expressed in the eye, thyroid, prostate, kidney and liver. Abundantly expressed in the CNS, including hippocampus, olfactory bulb, cortex, cerebellum. Not detected in the white matter.

Its subcellular location is the cell membrane. It is found in the golgi apparatus membrane. The protein resides in the endoplasmic reticulum membrane. Its function is as follows. Structural component of the gap junctions and the hemichannels. This is Pannexin-2 (Panx2) from Rattus norvegicus (Rat).